Consider the following 248-residue polypeptide: Phosphoribosylformylglycinamidine synthase subunit PurQ (248 aa).

Positions 6-248 (AMVLRMEGTN…IFFRILYNST (243 aa)) constitute a Glutamine amidotransferase type-1 domain. Catalysis depends on cysteine 95, which acts as the Nucleophile. Active-site residues include histidine 215 and glutamate 217.

Part of the FGAM synthase complex composed of 1 PurL, 1 PurQ and 2 PurS subunits.

Its subcellular location is the cytoplasm. It carries out the reaction N(2)-formyl-N(1)-(5-phospho-beta-D-ribosyl)glycinamide + L-glutamine + ATP + H2O = 2-formamido-N(1)-(5-O-phospho-beta-D-ribosyl)acetamidine + L-glutamate + ADP + phosphate + H(+). The enzyme catalyses L-glutamine + H2O = L-glutamate + NH4(+). Its pathway is purine metabolism; IMP biosynthesis via de novo pathway; 5-amino-1-(5-phospho-D-ribosyl)imidazole from N(2)-formyl-N(1)-(5-phospho-D-ribosyl)glycinamide: step 1/2. Part of the phosphoribosylformylglycinamidine synthase complex involved in the purines biosynthetic pathway. Catalyzes the ATP-dependent conversion of formylglycinamide ribonucleotide (FGAR) and glutamine to yield formylglycinamidine ribonucleotide (FGAM) and glutamate. The FGAM synthase complex is composed of three subunits. PurQ produces an ammonia molecule by converting glutamine to glutamate. PurL transfers the ammonia molecule to FGAR to form FGAM in an ATP-dependent manner. PurS interacts with PurQ and PurL and is thought to assist in the transfer of the ammonia molecule from PurQ to PurL. This chain is Phosphoribosylformylglycinamidine synthase subunit PurQ, found in Picrophilus torridus (strain ATCC 700027 / DSM 9790 / JCM 10055 / NBRC 100828 / KAW 2/3).